A 117-amino-acid chain; its full sequence is Acylphosphatase (117 aa).

An Acylphosphatase-like domain is found at 21-107; that stretch reads RWRFRIRGLV…TGADWFEIRP (87 aa). Residues R36 and N54 contribute to the active site.

Belongs to the acylphosphatase family.

It carries out the reaction an acyl phosphate + H2O = a carboxylate + phosphate + H(+). The polypeptide is Acylphosphatase (acyP) (Synechococcus sp. (strain RCC307)).